The following is a 237-amino-acid chain: Mitochondrial inner membrane protease atp23 (237 aa).

Residues 1–18 show a composition bias toward polar residues; the sequence is MSTSESSNNGSQPGNQDT. The segment at 1-24 is disordered; sequence MSTSESSNNGSQPGNQDTGYIPGD. Position 136 (His136) interacts with a divalent metal cation. Glu137 is an active-site residue. Position 140 (His140) interacts with a divalent metal cation.

This sequence belongs to the peptidase M76 family.

The protein localises to the mitochondrion inner membrane. Functionally, has a dual role in the assembly of mitochondrial ATPase. Acts as a protease that removes N-terminal residues of mitochondrial ATPase CF(0) subunit 6 at the intermembrane space side. Also involved in the correct assembly of the membrane-embedded ATPase CF(0) particle, probably mediating association of subunit 6 with the subunit 9 ring. The protein is Mitochondrial inner membrane protease atp23 (atp23) of Aspergillus niger (strain ATCC MYA-4892 / CBS 513.88 / FGSC A1513).